Consider the following 450-residue polypeptide: Tubulin alpha-4 chain (450 aa).

Residue Gln-11 participates in GTP binding. Residue Lys-40 is modified to N6-acetyllysine. 6 residues coordinate GTP: Glu-71, Gly-144, Thr-145, Thr-179, Asn-206, and Asn-228. Residue Glu-71 participates in Mg(2+) binding. Residue Glu-254 is part of the active site. The segment at 431–450 (DYEEVGAESGEGDEGDEEEY) is disordered.

This sequence belongs to the tubulin family. In terms of assembly, dimer of alpha and beta chains. A typical microtubule is a hollow water-filled tube with an outer diameter of 25 nm and an inner diameter of 15 nM. Alpha-beta heterodimers associate head-to-tail to form protofilaments running lengthwise along the microtubule wall with the beta-tubulin subunit facing the microtubule plus end conferring a structural polarity. Microtubules usually have 13 protofilaments but different protofilament numbers can be found in some organisms and specialized cells. The cofactor is Mg(2+). Post-translationally, undergoes a tyrosination/detyrosination cycle, the cyclic removal and re-addition of a C-terminal tyrosine residue by the enzymes tubulin tyrosine carboxypeptidase (TTCP) and tubulin tyrosine ligase (TTL), respectively. Acetylation of alpha chains at Lys-40 stabilizes microtubules and affects affinity and processivity of microtubule motors. This modification has a role in multiple cellular functions, ranging from cell motility, cell cycle progression or cell differentiation to intracellular trafficking and signaling.

It localises to the cytoplasm. The protein localises to the cytoskeleton. It catalyses the reaction GTP + H2O = GDP + phosphate + H(+). Functionally, tubulin is the major constituent of microtubules, a cylinder consisting of laterally associated linear protofilaments composed of alpha- and beta-tubulin heterodimers. Microtubules grow by the addition of GTP-tubulin dimers to the microtubule end, where a stabilizing cap forms. Below the cap, tubulin dimers are in GDP-bound state, owing to GTPase activity of alpha-tubulin. In Gossypium hirsutum (Upland cotton), this protein is Tubulin alpha-4 chain.